A 311-amino-acid chain; its full sequence is Aspartate carbamoyltransferase catalytic subunit (311 aa).

Positions 55 and 56 each coordinate carbamoyl phosphate. Residue K85 participates in L-aspartate binding. 3 residues coordinate carbamoyl phosphate: R106, H135, and Q138. Positions 168 and 230 each coordinate L-aspartate. 2 residues coordinate carbamoyl phosphate: L268 and P269.

The protein belongs to the aspartate/ornithine carbamoyltransferase superfamily. ATCase family. Heterododecamer (2C3:3R2) of six catalytic PyrB chains organized as two trimers (C3), and six regulatory PyrI chains organized as three dimers (R2).

The catalysed reaction is carbamoyl phosphate + L-aspartate = N-carbamoyl-L-aspartate + phosphate + H(+). It participates in pyrimidine metabolism; UMP biosynthesis via de novo pathway; (S)-dihydroorotate from bicarbonate: step 2/3. Catalyzes the condensation of carbamoyl phosphate and aspartate to form carbamoyl aspartate and inorganic phosphate, the committed step in the de novo pyrimidine nucleotide biosynthesis pathway. The polypeptide is Aspartate carbamoyltransferase catalytic subunit (Pectobacterium atrosepticum (strain SCRI 1043 / ATCC BAA-672) (Erwinia carotovora subsp. atroseptica)).